The primary structure comprises 599 residues: Cytosolic Fe-S cluster assembly factor nar1 (599 aa).

Residues C20, C62, C65, C68, C210, C265, C468, and C472 each coordinate [4Fe-4S] cluster.

Belongs to the NARF family.

Functionally, component of the cytosolic Fe/S protein assembly machinery. Required for maturation of extramitochondrial Fe/S proteins. May play a role in the transfer of pre-assembled Fe/S clusters to target apoproteins. This Aspergillus terreus (strain NIH 2624 / FGSC A1156) protein is Cytosolic Fe-S cluster assembly factor nar1 (nar1).